The chain runs to 241 residues: 2-C-methyl-D-erythritol 4-phosphate cytidylyltransferase (241 aa).

The protein belongs to the IspD/TarI cytidylyltransferase family. IspD subfamily.

It carries out the reaction 2-C-methyl-D-erythritol 4-phosphate + CTP + H(+) = 4-CDP-2-C-methyl-D-erythritol + diphosphate. The protein operates within isoprenoid biosynthesis; isopentenyl diphosphate biosynthesis via DXP pathway; isopentenyl diphosphate from 1-deoxy-D-xylulose 5-phosphate: step 2/6. Its function is as follows. Catalyzes the formation of 4-diphosphocytidyl-2-C-methyl-D-erythritol from CTP and 2-C-methyl-D-erythritol 4-phosphate (MEP). The protein is 2-C-methyl-D-erythritol 4-phosphate cytidylyltransferase of Pseudoalteromonas translucida (strain TAC 125).